A 379-amino-acid chain; its full sequence is Succinyl-diaminopimelate desuccinylase (379 aa).

His70 serves as a coordination point for Zn(2+). Asp72 is a catalytic residue. Asp103 is a Zn(2+) binding site. Catalysis depends on Glu137, which acts as the Proton acceptor. Zn(2+) is bound by residues Glu138, Glu166, and His352.

This sequence belongs to the peptidase M20A family. DapE subfamily. As to quaternary structure, homodimer. Requires Zn(2+) as cofactor. The cofactor is Co(2+).

It catalyses the reaction N-succinyl-(2S,6S)-2,6-diaminopimelate + H2O = (2S,6S)-2,6-diaminopimelate + succinate. The protein operates within amino-acid biosynthesis; L-lysine biosynthesis via DAP pathway; LL-2,6-diaminopimelate from (S)-tetrahydrodipicolinate (succinylase route): step 3/3. Functionally, catalyzes the hydrolysis of N-succinyl-L,L-diaminopimelic acid (SDAP), forming succinate and LL-2,6-diaminopimelate (DAP), an intermediate involved in the bacterial biosynthesis of lysine and meso-diaminopimelic acid, an essential component of bacterial cell walls. This chain is Succinyl-diaminopimelate desuccinylase, found in Burkholderia cenocepacia (strain HI2424).